We begin with the raw amino-acid sequence, 344 residues long: Fructose-bisphosphate aldolase (344 aa).

Residue Ser-53 coordinates D-glyceraldehyde 3-phosphate. Asp-95 (proton donor) is an active-site residue. Zn(2+)-binding residues include His-96, Asp-131, Glu-161, and His-212. Dihydroxyacetone phosphate is bound at residue Gly-213. His-252 contributes to the Zn(2+) binding site. Dihydroxyacetone phosphate is bound by residues 253 to 255 (GGS) and 274 to 277 (NVDT).

It belongs to the class II fructose-bisphosphate aldolase family. The cofactor is Zn(2+).

It catalyses the reaction beta-D-fructose 1,6-bisphosphate = D-glyceraldehyde 3-phosphate + dihydroxyacetone phosphate. It participates in carbohydrate degradation; glycolysis; D-glyceraldehyde 3-phosphate and glycerone phosphate from D-glucose: step 4/4. Catalyzes the aldol condensation of dihydroxyacetone phosphate (DHAP or glycerone-phosphate) with glyceraldehyde 3-phosphate (G3P) to form fructose 1,6-bisphosphate (FBP) in gluconeogenesis and the reverse reaction in glycolysis. In Mycobacterium bovis (strain ATCC BAA-935 / AF2122/97), this protein is Fructose-bisphosphate aldolase (fba).